The chain runs to 531 residues: NADH-quinone oxidoreductase subunit N (531 aa).

14 helical membrane-spanning segments follow: residues 8–28, 41–61, 81–101, 146–166, 172–192, 208–228, 250–270, 282–302, 318–338, 350–370, 372–392, 418–438, 453–473, and 500–520; these read VEYFLLAPMLIVFSVAVAGVL, AQVTLALGGSAVALIAVIVVA, ATLFLQGTVLLVTIMAVVFMA, GATQTELFPLAMLSVGGMMVF, LLTMFVALEVLSLPLYLMCGL, FLLGAFSSAFFLYGVALLYGA, ALAGVALLAVGLLFKVGAVPF, PTPITGFMAAATKVAAFGALL, PVLWAIAILTMTVGTVTAVNQ, VAHVGFILTGVIADNPAGLSA, LFYLVAYSFSTMGAFAIVGLV, IVGVMLSMFLLAFAGIPLTSG, GAVPLVIVGVISSGVAAYFYV, and AAIAVCTVVTVVLGIAPQPVL.

Belongs to the complex I subunit 2 family. As to quaternary structure, NDH-1 is composed of 14 different subunits. Subunits NuoA, H, J, K, L, M, N constitute the membrane sector of the complex.

It is found in the cell membrane. It catalyses the reaction a quinone + NADH + 5 H(+)(in) = a quinol + NAD(+) + 4 H(+)(out). In terms of biological role, NDH-1 shuttles electrons from NADH, via FMN and iron-sulfur (Fe-S) centers, to quinones in the respiratory chain. The immediate electron acceptor for the enzyme in this species is believed to be a menaquinone. Couples the redox reaction to proton translocation (for every two electrons transferred, four hydrogen ions are translocated across the cytoplasmic membrane), and thus conserves the redox energy in a proton gradient. This chain is NADH-quinone oxidoreductase subunit N, found in Mycobacterium tuberculosis (strain CDC 1551 / Oshkosh).